The chain runs to 287 residues: MKSRLFIISQYLLPHHLLSRLAGCIAECRVRWFKNAFTAWFAKRYQVNMSEALVEDLSAYEHFNAFFTRALKPGARPLDETPGAILCPADGAVSQLGPIEHGRIFQAKGHGFSAQELLGGDPAMAAPFMGGEFATIYLSPKDYHRVHMPLAGTLREMVYVPGRLFSVNQTTAENVPELFARNERVVCLFDTERGPMAVVLVGAMIVASIETVWAGLVTPPKRELKTFRYDEASRTPIHLEKGAELGRFKLGSTAIVLFGPEQVKWAESLGAGSAVRMGQQLAAPVQA.

Residues aspartate 90, histidine 147, and serine 252 each act as charge relay system; for autoendoproteolytic cleavage activity in the active site. Residue serine 252 is the Schiff-base intermediate with substrate; via pyruvic acid; for decarboxylase activity of the active site. Serine 252 carries the post-translational modification Pyruvic acid (Ser); by autocatalysis.

The protein belongs to the phosphatidylserine decarboxylase family. PSD-B subfamily. Prokaryotic type I sub-subfamily. Heterodimer of a large membrane-associated beta subunit and a small pyruvoyl-containing alpha subunit. Requires pyruvate as cofactor. Post-translationally, is synthesized initially as an inactive proenzyme. Formation of the active enzyme involves a self-maturation process in which the active site pyruvoyl group is generated from an internal serine residue via an autocatalytic post-translational modification. Two non-identical subunits are generated from the proenzyme in this reaction, and the pyruvate is formed at the N-terminus of the alpha chain, which is derived from the carboxyl end of the proenzyme. The autoendoproteolytic cleavage occurs by a canonical serine protease mechanism, in which the side chain hydroxyl group of the serine supplies its oxygen atom to form the C-terminus of the beta chain, while the remainder of the serine residue undergoes an oxidative deamination to produce ammonia and the pyruvoyl prosthetic group on the alpha chain. During this reaction, the Ser that is part of the protease active site of the proenzyme becomes the pyruvoyl prosthetic group, which constitutes an essential element of the active site of the mature decarboxylase.

It is found in the cell membrane. It carries out the reaction a 1,2-diacyl-sn-glycero-3-phospho-L-serine + H(+) = a 1,2-diacyl-sn-glycero-3-phosphoethanolamine + CO2. It participates in phospholipid metabolism; phosphatidylethanolamine biosynthesis; phosphatidylethanolamine from CDP-diacylglycerol: step 2/2. Functionally, catalyzes the formation of phosphatidylethanolamine (PtdEtn) from phosphatidylserine (PtdSer). This Pseudomonas putida (strain ATCC 700007 / DSM 6899 / JCM 31910 / BCRC 17059 / LMG 24140 / F1) protein is Phosphatidylserine decarboxylase proenzyme.